The following is a 334-amino-acid chain: Heat-inducible transcription repressor HrcA (334 aa).

Belongs to the HrcA family.

In terms of biological role, negative regulator of class I heat shock genes (grpE-dnaK-dnaJ and groELS operons). Prevents heat-shock induction of these operons. This is Heat-inducible transcription repressor HrcA from Albidiferax ferrireducens (strain ATCC BAA-621 / DSM 15236 / T118) (Rhodoferax ferrireducens).